A 251-amino-acid chain; its full sequence is UPF0309 protein GK1441 (251 aa).

Residues 31-214 (VSEAIQNGGI…VLMAENGIEP (184 aa)) enclose the SIS domain.

It belongs to the UPF0309 family.

The polypeptide is UPF0309 protein GK1441 (Geobacillus kaustophilus (strain HTA426)).